A 154-amino-acid chain; its full sequence is Holo-[acyl-carrier-protein] synthase (154 aa).

The Mg(2+) site is built by Asp8 and Glu57.

The protein belongs to the P-Pant transferase superfamily. AcpS family. It depends on Mg(2+) as a cofactor.

It localises to the cytoplasm. The enzyme catalyses apo-[ACP] + CoA = holo-[ACP] + adenosine 3',5'-bisphosphate + H(+). Transfers the 4'-phosphopantetheine moiety from coenzyme A to a Ser of acyl-carrier-protein. This chain is Holo-[acyl-carrier-protein] synthase, found in Nitrosococcus oceani (strain ATCC 19707 / BCRC 17464 / JCM 30415 / NCIMB 11848 / C-107).